The chain runs to 539 residues: Chaperonin GroEL 2 (539 aa).

Residues 29-32 (TIGP), 86-90 (DGTTT), Gly414, 479-481 (DAL), and Asp495 each bind ATP.

This sequence belongs to the chaperonin (HSP60) family. As to quaternary structure, forms a cylinder of 14 subunits composed of two heptameric rings stacked back-to-back. Interacts with the co-chaperonin GroES.

The protein localises to the cytoplasm. It carries out the reaction ATP + H2O + a folded polypeptide = ADP + phosphate + an unfolded polypeptide.. Its function is as follows. Together with its co-chaperonin GroES, plays an essential role in assisting protein folding. The GroEL-GroES system forms a nano-cage that allows encapsulation of the non-native substrate proteins and provides a physical environment optimized to promote and accelerate protein folding. This is Chaperonin GroEL 2 from Synechococcus sp. (strain JA-2-3B'a(2-13)) (Cyanobacteria bacterium Yellowstone B-Prime).